The primary structure comprises 1066 residues: Protein sts5 (1066 aa).

A compositionally biased stretch (low complexity) spans 18–28 (QQDPSDAQSSP). 3 disordered regions span residues 18–40 (QQDP…SLTT), 154–178 (ATST…SPNS), and 247–286 (SNFR…RKNL). Residues 29-40 (TFVPSANPSLTT) are compositionally biased toward polar residues. A Phosphothreonine modification is found at Thr-157. Residues 168 to 178 (HSVASVSSPNS) are compositionally biased toward low complexity. Thr-262 carries the phosphothreonine modification. Position 264 is a phosphoserine (Ser-264). The segment covering 270–280 (SGSGFSSGGSG) has biased composition (gly residues). Thr-377 is subject to Phosphothreonine. The interval 454–480 (SSAANKERQTSSGNQGSSNNSGNDKPK) is disordered. The span at 464-476 (SSGNQGSSNNSGN) shows a compositional bias: low complexity. Residues 482 to 556 (VWFKPSDKRV…AQVSALLHDT (75 aa)) enclose the CSD2 domain. The RNB domain maps to 618–934 (NINSSSATDF…VHYQLQLLLR (317 aa)). The DIS3L2 C-terminal domain occupies 983 to 1033 (QDGLVCFVAPSYFDVFFPSLGMEKRVHLDLLNLTHVRFEEDQGILSLYDES).

This sequence belongs to the RNR ribonuclease family. As to quaternary structure, interacts with serine/threonine phosphatase ppe1, protein kinase C and an osmosensing MAP kinase.

Its subcellular location is the cytoplasm. Functionally, required for the maintenance of cell shape during interphase. Required for localization of cortical actin to the growing tips before mitosis. The polypeptide is Protein sts5 (sts5) (Schizosaccharomyces pombe (strain 972 / ATCC 24843) (Fission yeast)).